The primary structure comprises 179 residues: Serglycin (179 aa).

The first 26 residues, 1–26 (MRQVPVGTRLVLALAFVLVWGSSVQG), serve as a signal peptide directing secretion. Positions 27 to 75 (YPARRARYQWVRCKPDGIFANCIEEKGPRFDLIAEESNVGPPMTDPVLM) are cleaved as a propeptide — activation peptide. A disulfide bond links cysteine 39 and cysteine 48. The segment at 86–145 (SDDYSGSGSGSGSGSGSGSGSGSGSGSGSGSGSGSGSGSGSGSGSGSGSGSGSLADMEWE) is disordered. O-linked (Xyl...) (glycosaminoglycan) serine glycosylation is found at serine 90 and serine 92. 24 consecutive repeat copies span residues 90-91 (SG), 92-93 (SG), 94-95 (SG), 96-97 (SG), 98-99 (SG), 100-101 (SG), 102-103 (SG), 104-105 (SG), 106-107 (SG), 108-109 (SG), 110-111 (SG), 112-113 (SG), 114-115 (SG), 116-117 (SG), 118-119 (SG), 120-121 (SG), 122-123 (SG), 124-125 (SG), 126-127 (SG), 128-129 (SG), 130-131 (SG), 132-133 (SG), 134-135 (SG), and 136-137 (SG). A 24 X 2 AA tandem repeats of S-G region spans residues 90–137 (SGSGSGSGSGSGSGSGSGSGSGSGSGSGSGSGSGSGSGSGSGSGSGSG). Over residues 92–136 (SGSGSGSGSGSGSGSGSGSGSGSGSGSGSGSGSGSGSGSGSGSGS) the composition is skewed to gly residues. O-linked (Xyl...) (glycosaminoglycan) serine glycosylation is found at serine 96, serine 98, serine 100, serine 102, serine 104, and serine 106.

Belongs to the serglycin family. As to quaternary structure, binds to activated CD44 and to GZMB. Post-translationally, O-glycosylated; contains chondroitin sulfate and heparan sulfate.

It localises to the cytoplasmic granule. It is found in the cytolytic granule. The protein resides in the secreted. Its subcellular location is the extracellular space. The protein localises to the golgi apparatus. Its function is as follows. Plays a role in formation of mast cell secretory granules and mediates storage of various compounds in secretory vesicles. Required for storage of some proteases in both connective tissue and mucosal mast cells and for storage of granzyme B in T-lymphocytes. Plays a role in localizing neutrophil elastase in azurophil granules of neutrophils. Mediates processing of MMP2. Plays a role in cytotoxic cell granule-mediated apoptosis by forming a complex with granzyme B which is delivered to cells by perforin to induce apoptosis. Regulates the secretion of TNF-alpha and may also regulate protease secretion. Inhibits bone mineralization. In Rattus norvegicus (Rat), this protein is Serglycin (Srgn).